The primary structure comprises 871 residues: Scavenger receptor class F member 2 (871 aa).

Residues 1–20 (MEGAGPRGAGPARRRGAGGP) are disordered. A signal peptide spans 1 to 43 (MEGAGPRGAGPARRRGAGGPPSPLLPSLLLLLLLWMLPDTVAP). Over 44-441 (QELNPRGRNV…ACHLETNQRK (398 aa)) the chain is Extracellular. 6 EGF-like domains span residues 71 to 110 (QGDECGIAVCEGNSTCSENEVCVRPGECRCRHGYFGANCD), 122 to 153 (CKELCSCHPHGQCEDVTGQCTCHARRWGARCE), 148 to 182 (WGARCEHACQCQHGTCHPRSGACRCEPGWWGAQCA), 183 to 212 (SACYCSATSRCDPQTGACLCHAGWWGRSCN), 213 to 241 (NQCACNSSPCEQQSGRCQCRERTFGARCD), and 236 to 270 (FGARCDRYCQCFRGRCHPVDGTCACEPGYRGKYCR). 18 disulfides stabilise this stretch: Cys75/Cys86, Cys80/Cys98, Cys100/Cys109, Cys126/Cys134, Cys128/Cys141, Cys143/Cys152, Cys156/Cys163, Cys158/Cys170, Cys172/Cys181, Cys185/Cys193, Cys187/Cys200, Cys202/Cys211, Cys215/Cys222, Cys217/Cys229, Cys231/Cys240, Cys244/Cys251, Cys246/Cys258, and Cys260/Cys269. N-linked (GlcNAc...) asparagine glycosylation is present at Asn83. Asn310 and Asn365 each carry an N-linked (GlcNAc...) asparagine glycan. The 32-residue stretch at 372 to 403 (CAFVCADCGSGHCDFQSGRCLCSPGVHGPHCN) folds into the EGF-like 7 domain. Cystine bridges form between Cys376–Cys384, Cys379–Cys391, and Cys393–Cys402. N-linked (GlcNAc...) asparagine glycosylation occurs at Asn403. Residues 442–462 (GVMGAGALLVLLVCLLLSLLG) traverse the membrane as a helical segment. Residues 463–871 (CCCACRGKDP…ELGRAGAPTL (409 aa)) are Cytoplasmic-facing. Ser551 is subject to Phosphoserine. Residues 570 to 579 (EAPAESRDPE) show a composition bias toward basic and acidic residues. A disordered region spans residues 570–871 (EAPAESRDPE…ELGRAGAPTL (302 aa)). Ser613 carries the phosphoserine modification. Residue Tyr628 is modified to Phosphotyrosine. Residues 632–643 (ARREARPARARG) are compositionally biased toward basic and acidic residues. Residues Ser651, Ser653, Ser710, Ser718, and Ser742 each carry the phosphoserine modification. Residues 705–725 (TPSDKSAHTVEHGSPRTRDPT) show a composition bias toward basic and acidic residues. Low complexity predominate over residues 821–831 (PPATETPGPEK). Basic residues predominate over residues 844 to 856 (KKTPIQKPPRKKS). Residues 861 to 871 (GELGRAGAPTL) are compositionally biased toward low complexity.

As to quaternary structure, homophilic and heterophilic interaction via its extracellular domain. Interacts with SCARF1. The heterophilic interaction with SCARF1, which is stronger than the homophilic interaction with itself, is suppressed by the presence of SCARF1 ligand such as Ac-LDL. As to expression, predominantly expressed in endothelial cells. Expressed in heart, placenta, lung, kidney, spleen, small intestine and ovary.

The protein resides in the membrane. Probable adhesion protein, which mediates homophilic and heterophilic interactions. In contrast to SCARF1, it poorly mediates the binding and degradation of acetylated low density lipoprotein (Ac-LDL). This chain is Scavenger receptor class F member 2 (SCARF2), found in Homo sapiens (Human).